The sequence spans 347 residues: Heat-inducible transcription repressor HrcA (347 aa).

It belongs to the HrcA family.

Functionally, negative regulator of class I heat shock genes (grpE-dnaK-dnaJ and groELS operons). Prevents heat-shock induction of these operons. The chain is Heat-inducible transcription repressor HrcA from Enterococcus faecalis (strain ATCC 700802 / V583).